The chain runs to 443 residues: ATP-dependent protease ATPase subunit HslU (443 aa).

ATP contacts are provided by residues Ile20, 62–67 (GVGKTE), Asp255, Glu321, and Arg393.

It belongs to the ClpX chaperone family. HslU subfamily. A double ring-shaped homohexamer of HslV is capped on each side by a ring-shaped HslU homohexamer. The assembly of the HslU/HslV complex is dependent on binding of ATP.

The protein resides in the cytoplasm. Functionally, ATPase subunit of a proteasome-like degradation complex; this subunit has chaperone activity. The binding of ATP and its subsequent hydrolysis by HslU are essential for unfolding of protein substrates subsequently hydrolyzed by HslV. HslU recognizes the N-terminal part of its protein substrates and unfolds these before they are guided to HslV for hydrolysis. The sequence is that of ATP-dependent protease ATPase subunit HslU from Helicobacter pylori (strain HPAG1).